Reading from the N-terminus, the 729-residue chain is Polyphosphate kinase (729 aa).

Positions 1-46 (MTEAQTRTEPSESSESSEAVAPAITSAADSAPEAPPATTAPAIENP) are disordered. Residues 25–42 (TSAADSAPEAPPATTAPA) show a composition bias toward low complexity. Position 90 (Asn-90) interacts with ATP. Arg-422 and Arg-452 together coordinate Mg(2+). His-482 serves as the catalytic Phosphohistidine intermediate. The ATP site is built by Tyr-515, Arg-611, and His-639.

Belongs to the polyphosphate kinase 1 (PPK1) family. It depends on Mg(2+) as a cofactor. In terms of processing, an intermediate of this reaction is the autophosphorylated ppk in which a phosphate is covalently linked to a histidine residue through a N-P bond.

The catalysed reaction is [phosphate](n) + ATP = [phosphate](n+1) + ADP. Functionally, catalyzes the reversible transfer of the terminal phosphate of ATP to form a long-chain polyphosphate (polyP). The sequence is that of Polyphosphate kinase from Mycolicibacterium gilvum (strain PYR-GCK) (Mycobacterium gilvum (strain PYR-GCK)).